Consider the following 230-residue polypeptide: Large ribosomal subunit protein uL1 (230 aa).

It belongs to the universal ribosomal protein uL1 family. As to quaternary structure, part of the 50S ribosomal subunit.

In terms of biological role, binds directly to 23S rRNA. The L1 stalk is quite mobile in the ribosome, and is involved in E site tRNA release. Its function is as follows. Protein L1 is also a translational repressor protein, it controls the translation of the L11 operon by binding to its mRNA. In Bacillus cereus (strain B4264), this protein is Large ribosomal subunit protein uL1.